Here is a 225-residue protein sequence, read N- to C-terminus: Ribonuclease 3 (225 aa).

One can recognise an RNase III domain in the interval 4–127; sequence IEKLEQSLTY…IIGAIHLEAG (124 aa). Residue E40 participates in Mg(2+) binding. D44 is an active-site residue. D113 and E116 together coordinate Mg(2+). Residue E116 is part of the active site. In terms of domain architecture, DRBM spans 154–223; sequence DYKTKLQEIT…AKIALEKLGS (70 aa).

It belongs to the ribonuclease III family. As to quaternary structure, homodimer. Mg(2+) is required as a cofactor.

It localises to the cytoplasm. It carries out the reaction Endonucleolytic cleavage to 5'-phosphomonoester.. In terms of biological role, digests double-stranded RNA. Involved in the processing of primary rRNA transcript to yield the immediate precursors to the large and small rRNAs (23S and 16S). Processes some mRNAs, and tRNAs when they are encoded in the rRNA operon. Processes pre-crRNA and tracrRNA of type II CRISPR loci if present in the organism. The polypeptide is Ribonuclease 3 (Campylobacter jejuni subsp. doylei (strain ATCC BAA-1458 / RM4099 / 269.97)).